The primary structure comprises 161 residues: MPLKLAVYPGSFDPVTYGHLDIIDRGLKIFDGVIVAVARNSEKNALFTVQERIELLTEILKDRPEARVETFDGLLVDYVRRVGASVVIRGLRAVSDFEFEFQLAQMNRNITRDVETLFMMTSVPYSYLSSSIVKEVSCLNGPVDKLVPPLVKSALDAKFRG.

A substrate-binding site is contributed by S11. ATP is bound by residues 11–12 (SF) and H19. Substrate-binding residues include K43, L75, and R89. Residues 90–92 (GLR), E100, and 125–131 (YSYLSSS) each bind ATP.

The protein belongs to the bacterial CoaD family. In terms of assembly, homohexamer. Mg(2+) is required as a cofactor.

It is found in the cytoplasm. The catalysed reaction is (R)-4'-phosphopantetheine + ATP + H(+) = 3'-dephospho-CoA + diphosphate. Its pathway is cofactor biosynthesis; coenzyme A biosynthesis; CoA from (R)-pantothenate: step 4/5. Functionally, reversibly transfers an adenylyl group from ATP to 4'-phosphopantetheine, yielding dephospho-CoA (dPCoA) and pyrophosphate. The chain is Phosphopantetheine adenylyltransferase from Citrifermentans bemidjiense (strain ATCC BAA-1014 / DSM 16622 / JCM 12645 / Bem) (Geobacter bemidjiensis).